The sequence spans 470 residues: MFSLRNLPSLAPFVSAYASLTGYVMMIKPFLEMTIPPPLQNYMISYLNSFLHSTPSTLTLIIDDHIKNGMYNELYGAAQVYISTKVNHNAERLRISRDRSEKNVNIHFSVGEVVSDIYQGIEVKWRFCVDSNKSNMVHYFGEHFKLNPDRECVELSFEKKHTELVLNSYIPYVESKAKVINNERKILKMYSYCCMYLKWQSVNLEHPSTFDTMAMNEELKRSVMGDLDRFIRRKDFYKRVGKPWKRGYLLYGPPGTGKTSLVAAIANYLKFDIYDLQLASVREDADLRRLLLGTTNSSILLVEDIDCAVDLHTRLQPKTQDDTKGSSMLTLSGLLTCIDGLWSSCGDERIVIFTTTHKERLDPALLRPGRMDMHIHMGHCCFDVFKTLASNYLGLSHDDPHHLYPEIERLIKGEVLTPAQVAEELMKNEDPDVALEGLVKVLKRKRLELEKYDGETGRGGLRKPELQFFL.

A signal peptide spans 1–18 (MFSLRNLPSLAPFVSAYA). 252-259 (GPPGTGKT) contacts ATP.

Belongs to the AAA ATPase family. BCS1 subfamily. Requires Mg(2+) as cofactor.

The catalysed reaction is ATP + H2O = ADP + phosphate + H(+). The polypeptide is AAA-ATPase At5g17730 (Arabidopsis thaliana (Mouse-ear cress)).